Here is a 490-residue protein sequence, read N- to C-terminus: Glutamate--tRNA ligase (490 aa).

Positions 12–22 (PSPTGTPHVGL) match the 'HIGH' region motif. The short motif at 256–260 (KLSKR) is the 'KMSKS' region element. Lys-259 provides a ligand contact to ATP.

This sequence belongs to the class-I aminoacyl-tRNA synthetase family. Glutamate--tRNA ligase type 1 subfamily. In terms of assembly, monomer.

The protein resides in the cytoplasm. It catalyses the reaction tRNA(Glu) + L-glutamate + ATP = L-glutamyl-tRNA(Glu) + AMP + diphosphate. Functionally, catalyzes the attachment of glutamate to tRNA(Glu) in a two-step reaction: glutamate is first activated by ATP to form Glu-AMP and then transferred to the acceptor end of tRNA(Glu). This is Glutamate--tRNA ligase from Mycobacterium sp. (strain KMS).